Reading from the N-terminus, the 316-residue chain is 4-hydroxy-3-methylbut-2-enyl diphosphate reductase (316 aa).

C17 contributes to the [4Fe-4S] cluster binding site. (2E)-4-hydroxy-3-methylbut-2-enyl diphosphate-binding residues include H46 and H79. Dimethylallyl diphosphate is bound by residues H46 and H79. H46 and H79 together coordinate isopentenyl diphosphate. C101 is a [4Fe-4S] cluster binding site. Position 129 (H129) interacts with (2E)-4-hydroxy-3-methylbut-2-enyl diphosphate. H129 serves as a coordination point for dimethylallyl diphosphate. H129 provides a ligand contact to isopentenyl diphosphate. Catalysis depends on E131, which acts as the Proton donor. T170 contributes to the (2E)-4-hydroxy-3-methylbut-2-enyl diphosphate binding site. Position 200 (C200) interacts with [4Fe-4S] cluster. Residues S228, S229, N230, and S273 each contribute to the (2E)-4-hydroxy-3-methylbut-2-enyl diphosphate site. The dimethylallyl diphosphate site is built by S228, S229, N230, and S273. S228, S229, N230, and S273 together coordinate isopentenyl diphosphate.

The protein belongs to the IspH family. [4Fe-4S] cluster serves as cofactor.

The catalysed reaction is isopentenyl diphosphate + 2 oxidized [2Fe-2S]-[ferredoxin] + H2O = (2E)-4-hydroxy-3-methylbut-2-enyl diphosphate + 2 reduced [2Fe-2S]-[ferredoxin] + 2 H(+). The enzyme catalyses dimethylallyl diphosphate + 2 oxidized [2Fe-2S]-[ferredoxin] + H2O = (2E)-4-hydroxy-3-methylbut-2-enyl diphosphate + 2 reduced [2Fe-2S]-[ferredoxin] + 2 H(+). The protein operates within isoprenoid biosynthesis; dimethylallyl diphosphate biosynthesis; dimethylallyl diphosphate from (2E)-4-hydroxy-3-methylbutenyl diphosphate: step 1/1. Its pathway is isoprenoid biosynthesis; isopentenyl diphosphate biosynthesis via DXP pathway; isopentenyl diphosphate from 1-deoxy-D-xylulose 5-phosphate: step 6/6. Catalyzes the conversion of 1-hydroxy-2-methyl-2-(E)-butenyl 4-diphosphate (HMBPP) into a mixture of isopentenyl diphosphate (IPP) and dimethylallyl diphosphate (DMAPP). Acts in the terminal step of the DOXP/MEP pathway for isoprenoid precursor biosynthesis. The protein is 4-hydroxy-3-methylbut-2-enyl diphosphate reductase of Roseobacter denitrificans (strain ATCC 33942 / OCh 114) (Erythrobacter sp. (strain OCh 114)).